The primary structure comprises 110 residues: Cation efflux system protein CusF (110 aa).

Positions 1–21 (MKKALQVAMFSLFTVIGFNAQ) are cleaved as a signal peptide.

As to quaternary structure, the cus efflux system is composed of CusA, CusB, CusC and CusF. Interacts with copper-exporting P-type ATPase CopA; when this protein is precharged with copper it binds very little CopA.

Its subcellular location is the periplasm. In terms of biological role, part of a cation efflux system that mediates resistance to copper and silver. Binds one copper per polypeptide. In Escherichia coli (strain K12), this protein is Cation efflux system protein CusF (cusF).